A 351-amino-acid polypeptide reads, in one-letter code: Glycerol-3-phosphate dehydrogenase 1-like protein (351 aa).

12 to 17 (GSGNWG) contributes to the NAD(+) binding site. Lys122 provides a ligand contact to substrate. Ala155 is an NAD(+) binding site. The Proton acceptor role is filled by Lys206. NAD(+) is bound by residues Arg271, Lys298, and Gln300. 271–272 (RN) contributes to the substrate binding site.

The protein belongs to the NAD-dependent glycerol-3-phosphate dehydrogenase family. Interacts with SCN5A. In terms of tissue distribution, most highly expressed in heart tissue, with lower levels in the skeletal muscle, kidney, lung and other organs.

The protein localises to the cytoplasm. It catalyses the reaction sn-glycerol 3-phosphate + NAD(+) = dihydroxyacetone phosphate + NADH + H(+). Plays a role in regulating cardiac sodium current; decreased enzymatic activity with resulting increased levels of glycerol 3-phosphate activating the DPD1L-dependent SCN5A phosphorylation pathway, may ultimately lead to decreased sodium current; cardiac sodium current may also be reduced due to alterations of NAD(H) balance induced by DPD1L. In Homo sapiens (Human), this protein is Glycerol-3-phosphate dehydrogenase 1-like protein.